Consider the following 444-residue polypeptide: Citrate-proton symporter (444 aa).

The Cytoplasmic portion of the chain corresponds to 1 to 41; sequence MPTARCSMRASSTAPVRMMATAGGARIGAILRVTSGNFLEQ. The helical transmembrane segment at 42-62 threads the bilayer; sequence FDFFLFGFYATYIAHTFFPAS. Topologically, residues 63–72 are periplasmic; that stretch reads SEFASLMMTF. The helical transmembrane segment at 73-93 threads the bilayer; the sequence is AVFGAGFLMRPIGAIVLGAYI. Residues 94 to 114 are Cytoplasmic-facing; that stretch reads DKVGRRKGLIVTLSIMATGTF. The helical transmembrane segment at 115 to 135 threads the bilayer; sequence LIVLIPSYQTIGLWAPLLVLI. The Periplasmic segment spans residues 136–137; it reads GR. The chain crosses the membrane as a helical span at residues 138–158; that stretch reads LLQGFSAGAELGGVSVYLAEI. Residues 159–177 are Cytoplasmic-facing; that stretch reads ATPGRKGFYTSWQSGSQQV. A helical transmembrane segment spans residues 178-198; sequence AIMVAAAMGFALNAVLEPSAI. Residue Ser199 is a topological domain, periplasmic. A helical transmembrane segment spans residues 200-220; it reads DWGWRIPFLFGVLIVPFIFIL. Residues 221-251 are Cytoplasmic-facing; the sequence is RRKLEETQEFTARRHHLAMRQVFATLLANWQ. The helical transmembrane segment at 252-272 threads the bilayer; that stretch reads VVIAGMMMVAMTTTAFYLITV. Topologically, residues 273–289 are periplasmic; that stretch reads YAPTFGKKVLMLSASDS. A helical membrane pass occupies residues 290–310; that stretch reads LLVTLLVAISNFFWLPVGGAL. The Cytoplasmic segment spans residues 311–318; the sequence is SDRFGRRS. Residues 319 to 339 form a helical membrane-spanning segment; that stretch reads VLIAMTLLALATAWPALTMLA. Asn340 is a topological domain (periplasmic). The helical transmembrane segment at 341 to 361 threads the bilayer; sequence APSFLMMLSVLLWLSFIYGMY. The Cytoplasmic segment spans residues 362 to 379; the sequence is NGAMIPALTEIMPAEVRV. Residues 380-400 traverse the membrane as a helical segment; sequence AGFSLAYSLATAVFGGFTPVI. The Periplasmic segment spans residues 401–411; that stretch reads STALIEYTGDK. The helical transmembrane segment at 412–432 threads the bilayer; it reads ASPGYWMSFAAICGLLATCYL. Over 433-444 the chain is Cytoplasmic; the sequence is YRRSAVALQTAR.

Belongs to the major facilitator superfamily. Metabolite:H+ Symporter (MHS) family (TC 2.A.1.6) family.

Its subcellular location is the cell inner membrane. Its function is as follows. Uptake of citrate across the boundary membrane with the concomitant transport of protons into the cell (symport system). This Klebsiella pneumoniae protein is Citrate-proton symporter (citH).